We begin with the raw amino-acid sequence, 106 residues long: UPF0145 protein CPF_0876 (106 aa).

It belongs to the UPF0145 family.

This is UPF0145 protein CPF_0876 from Clostridium perfringens (strain ATCC 13124 / DSM 756 / JCM 1290 / NCIMB 6125 / NCTC 8237 / Type A).